We begin with the raw amino-acid sequence, 856 residues long: Bifunctional uridylyltransferase/uridylyl-removing enzyme (856 aa).

A uridylyltransferase region spans residues 1-320 (MTLSAAPLQH…YCQVPRVTQH (320 aa)). Residues 321-678 (ISEYFHAVNG…ARLADDHEGL (358 aa)) are uridylyl-removing. One can recognise an HD domain in the interval 439 to 561 (VDEHILMVVR…VRTPRRLAAL (123 aa)). ACT domains lie at 679–760 (QVLI…LPPQ) and 788–856 (ILSI…ALRI).

The protein belongs to the GlnD family. Mg(2+) serves as cofactor.

It carries out the reaction [protein-PII]-L-tyrosine + UTP = [protein-PII]-uridylyl-L-tyrosine + diphosphate. The catalysed reaction is [protein-PII]-uridylyl-L-tyrosine + H2O = [protein-PII]-L-tyrosine + UMP + H(+). Uridylyltransferase (UTase) activity is inhibited by glutamine, while glutamine activates uridylyl-removing (UR) activity. Its function is as follows. Modifies, by uridylylation and deuridylylation, the PII regulatory proteins (GlnB and homologs), in response to the nitrogen status of the cell that GlnD senses through the glutamine level. Under low glutamine levels, catalyzes the conversion of the PII proteins and UTP to PII-UMP and PPi, while under higher glutamine levels, GlnD hydrolyzes PII-UMP to PII and UMP (deuridylylation). Thus, controls uridylylation state and activity of the PII proteins, and plays an important role in the regulation of nitrogen assimilation and metabolism. This Chromobacterium violaceum (strain ATCC 12472 / DSM 30191 / JCM 1249 / CCUG 213 / NBRC 12614 / NCIMB 9131 / NCTC 9757 / MK) protein is Bifunctional uridylyltransferase/uridylyl-removing enzyme.